The following is a 251-amino-acid chain: Chlorocatechol 1,2-dioxygenase (251 aa).

Tyr130, Tyr164, His188, and His190 together coordinate Fe cation.

The protein belongs to the intradiol ring-cleavage dioxygenase family. Fe(3+) is required as a cofactor.

The enzyme catalyses 3-chlorocatechol + O2 = (2E,4Z)-2-chloromuconate + 2 H(+). The catalysed reaction is 3,4-dichlorocatechol + O2 = (2Z,4Z)-2,3-dichloromuconate + 2 H(+). It carries out the reaction 3,5-dichlorocatechol + O2 = (2E,4E)-2,4-dichloromuconate + 2 H(+). It catalyses the reaction 3,6-dichlorocatechol + O2 = (2E,4E)-2,5-dichloromuconate + H(+). The enzyme catalyses 3,4,6-trichlorocatechol + O2 = (2Z,4E)-2,3,5-trichloromuconate + H(+). It functions in the pathway xenobiotic degradation. Functionally, chlorocatechol 1,2-dioxygenase involved in the degradation of chlorinated benzenes, that occurs via chlorocatechol intermediates. Displays broad substrate specificity. Preferentially cleaves 3-chlorocatechol and 3,4-dichlorocatechol, and shows lower activity on 3,5-dichlorocatechol, 3,6-dichlorocatechol and 3,4,6-trichlorocatechol in vitro. Is not able to convert 3,4,5-trichlorocatechol and 3,4,5,6-tetrachlorocatechol. Thus, probably functions in the degradation pathways of 1,2-dichlorobenzene, 1,4-dichlorobenzene and 1,2,4-trichlorobenzene (via 3,4-dichlorocatechol, 3,6-dichlorocatechol and 3,4,6-trichlorocatechol intermediates, respectively), which allow Pseudomonas sp. strain P51 to grow on these substrates as the sole carbon and energy source. This is Chlorocatechol 1,2-dioxygenase from Pseudomonas sp. (strain P51).